The chain runs to 144 residues: Maximins 3/H11 type 1 (144 aa).

Residues 1 to 18 (MNFKYIVAVSFLIASAYA) form the signal peptide. 2 consecutive propeptides follow at residues 19–43 (RSVQ…REIR) and 73–122 (RTAE…KKEK). Ile143 carries the isoleucine amide modification.

It belongs to the bombinin family. Expressed by the skin glands.

It localises to the secreted. Maximin-3 shows antibacterial activity against both Gram-positive and Gram-negative bacteria. It also shows antimicrobial activity against the fungus C.albicans, but not against A.flavus nor P.uticale. It has little hemolytic activity. It possess a significant cytotoxicity against tumor cell lines. It possess a significant anti-HIV activity. It shows high spermicidal activity. Functionally, maximin-H11 shows antimicrobial activity against bacteria and against the fungus C.albicans. Shows strong hemolytic activity. The chain is Maximins 3/H11 type 1 from Bombina maxima (Giant fire-bellied toad).